The primary structure comprises 325 residues: GMP reductase (325 aa).

The active-site Thioimidate intermediate is cysteine 174. 203–226 (IIADGGIRTHGDIAKSIRFGATMV) serves as a coordination point for NADP(+).

The protein belongs to the IMPDH/GMPR family. GuaC type 2 subfamily.

It catalyses the reaction IMP + NH4(+) + NADP(+) = GMP + NADPH + 2 H(+). Functionally, catalyzes the irreversible NADPH-dependent deamination of GMP to IMP. It functions in the conversion of nucleobase, nucleoside and nucleotide derivatives of G to A nucleotides, and in maintaining the intracellular balance of A and G nucleotides. This chain is GMP reductase, found in Helicobacter pylori (strain G27).